The sequence spans 370 residues: Ubiquitin carboxyl-terminal hydrolase 12-B (370 aa).

Residues 39 to 369 form the USP domain; it reads FGLVNFGNTC…SGYILFYQSR (331 aa). The active-site Nucleophile is the cysteine 48. Residues 145–168 form a disordered region; it reads KQEKQNGRIPNGNIDNENNNNTPD. Positions 155–165 are enriched in low complexity; that stretch reads NGNIDNENNNN. Residues cysteine 186, cysteine 189, cysteine 233, and cysteine 236 each coordinate Zn(2+). Residue histidine 317 is the Proton acceptor of the active site.

This sequence belongs to the peptidase C19 family. USP12/USP46 subfamily. Interacts with WDR48.

It carries out the reaction Thiol-dependent hydrolysis of ester, thioester, amide, peptide and isopeptide bonds formed by the C-terminal Gly of ubiquitin (a 76-residue protein attached to proteins as an intracellular targeting signal).. In terms of biological role, deubiquitinating enzyme. Has almost no deubiquitinating activity by itself and requires the interaction with wdr48 to have a high activity. This chain is Ubiquitin carboxyl-terminal hydrolase 12-B (usp12-b), found in Xenopus laevis (African clawed frog).